Reading from the N-terminus, the 167-residue chain is Zymogen granule membrane protein 16 (167 aa).

Residues 1-16 (MLAVALLVLLCASASA) form the signal peptide. A Jacalin-type lectin domain is found at 24-159 (SSYSGEYGGK…IDSISLHWDT (136 aa)).

The protein belongs to the jacalin lectin family.

It localises to the secreted. The protein localises to the extracellular space. Its subcellular location is the extracellular matrix. It is found in the zymogen granule lumen. The protein resides in the golgi apparatus lumen. In terms of biological role, may play a role in protein trafficking. May act as a linker molecule between the submembranous matrix on the luminal side of zymogen granule membrane (ZGM) and aggregated secretory proteins during granule formation in the TGN. The chain is Zymogen granule membrane protein 16 (Zg16) from Mus musculus (Mouse).